Reading from the N-terminus, the 490-residue chain is Cytochrome P450 2C26 (490 aa).

A heme-binding site is contributed by cysteine 435.

It belongs to the cytochrome P450 family. It depends on heme as a cofactor.

The protein localises to the endoplasmic reticulum membrane. It is found in the microsome membrane. It catalyses the reaction an organic molecule + reduced [NADPH--hemoprotein reductase] + O2 = an alcohol + oxidized [NADPH--hemoprotein reductase] + H2O + H(+). Catalyzes the hydroxylation of tolbutamide and the N-demethylation of aminopyrine and benzphetamine. This Mesocricetus auratus (Golden hamster) protein is Cytochrome P450 2C26 (CYP2C26).